The chain runs to 445 residues: Trigger factor (445 aa).

A PPIase FKBP-type domain is found at 163-248; that stretch reads GDTVVIDYVG…IHEVKVKELP (86 aa). Residues 425 to 445 form a disordered region; the sequence is KEVESAKDDADKEASDAKADK.

Belongs to the FKBP-type PPIase family. Tig subfamily.

The protein resides in the cytoplasm. The catalysed reaction is [protein]-peptidylproline (omega=180) = [protein]-peptidylproline (omega=0). Its function is as follows. Involved in protein export. Acts as a chaperone by maintaining the newly synthesized protein in an open conformation. Functions as a peptidyl-prolyl cis-trans isomerase. The sequence is that of Trigger factor from Lacticaseibacillus casei (strain BL23) (Lactobacillus casei).